The sequence spans 469 residues: MTAKFTDYIVKDIGLAEFGRKEISLAETEMPGLMATREEYGPKQPLKGAKIAGSLHMTIQTAVLIETLVALGAEVRWVSCNIYSTQDHAAAAIAAAGIPVFAVKGETLKDYWDYTAKLFDWSDGGTPNMILDDGGDATMFVHQGLRAENGDTMFLDQHNSEEEEIFFALIKRILKEKPKGYFATLAKNIKGVSEETTTGVHRLYDMEKAGKLLFPAINVNDSVTKSKFDNLYGCRESLVDGIRRGTDVMLSGKVAMVAGFGDVGKGSAASLRQAGCRVMVSEVDPICALQAAMEGYQVVTMEDAAPIADIFVTATGNKDIITIEHMRAMKDRAIVCNIGHFDNEIQVATLKNMKWDNIKPQVDEITFPDGKRMILLSEGRLVNLGNAMGHPSFVMSASFTNQTLAQIELFQNQGKYEKKVYVLPKSLDEKVARLHLAKIGVKLTELRKDQADYIGVKVEGPFKADHYRY.

Residues Thr58, Asp133, and Glu195 each coordinate substrate. NAD(+) is bound at residue 196 to 198; sequence TTT. 2 residues coordinate substrate: Lys225 and Asp229. NAD(+)-binding positions include Asn230, 259–264, Glu282, Asn317, 338–340, and Asn383; these read GFGDVG and IGH.

This sequence belongs to the adenosylhomocysteinase family. Requires NAD(+) as cofactor.

The protein resides in the cytoplasm. It catalyses the reaction S-adenosyl-L-homocysteine + H2O = L-homocysteine + adenosine. Its pathway is amino-acid biosynthesis; L-homocysteine biosynthesis; L-homocysteine from S-adenosyl-L-homocysteine: step 1/1. May play a key role in the regulation of the intracellular concentration of adenosylhomocysteine. In Rhodopseudomonas palustris (strain TIE-1), this protein is Adenosylhomocysteinase.